The following is a 236-amino-acid chain: 1-(5-phosphoribosyl)-5-[(5-phosphoribosylamino)methylideneamino] imidazole-4-carboxamide isomerase (236 aa).

D8 serves as the catalytic Proton acceptor. The active-site Proton donor is D127.

It belongs to the HisA/HisF family.

The protein localises to the cytoplasm. The catalysed reaction is 1-(5-phospho-beta-D-ribosyl)-5-[(5-phospho-beta-D-ribosylamino)methylideneamino]imidazole-4-carboxamide = 5-[(5-phospho-1-deoxy-D-ribulos-1-ylimino)methylamino]-1-(5-phospho-beta-D-ribosyl)imidazole-4-carboxamide. The protein operates within amino-acid biosynthesis; L-histidine biosynthesis; L-histidine from 5-phospho-alpha-D-ribose 1-diphosphate: step 4/9. The chain is 1-(5-phosphoribosyl)-5-[(5-phosphoribosylamino)methylideneamino] imidazole-4-carboxamide isomerase from Sulfurimonas denitrificans (strain ATCC 33889 / DSM 1251) (Thiomicrospira denitrificans (strain ATCC 33889 / DSM 1251)).